We begin with the raw amino-acid sequence, 966 residues long: Next to BRCA1 gene 1 protein (966 aa).

In terms of domain architecture, PB1 spans 4–85 (QVTLNVTFKN…NQLQMQVHEG (82 aa)). S116 carries the phosphoserine modification. The segment at 212-264 (SWHIACNNCQRRIVGVRYQCSLCPSYNICEDCEAGPYGHDTNHVLLKLRRPVV) adopts a ZZ-type zinc-finger fold. Zn(2+)-binding residues include C217, C220, C231, C234, C240, C243, H250, and H254. The ATG8 family protein-binding stretch occupies residues 542 to 636 (ASERELYIPS…KRKAENIASV (95 aa)). At T586 the chain carries Phosphothreonine; by GSK3-alpha. Phosphoserine occurs at positions 590, 596, and 625. Over residues 699–718 (EAVMEEEEDEEDEEEEDELK) the composition is skewed to acidic residues. Disordered stretches follow at residues 699 to 728 (EAVMEEEEDEEDEEEEDELKDEVQSQSSAS), 750 to 792 (MYSS…QPQE), and 848 to 879 (VPDQIRGEPRGSSGLVNSRQKSYDHSRHHHGS). Residues 727-738 (ASSEDYIIILPE) are ATG8 family protein-binding. Positions 913 to 957 (SEDQTAALMAHLFEMGFCDRQLNLRLLKKHNYNILQVVTELLQLN) constitute a UBA domain.

As to quaternary structure, homooligomer and heterooligomer. Interacts with TRIM55. Interacts with titin/TTN. Interacts with RNF29, USP8, MAP1LC3A, MAP1LC3B, MAP1LC3C, GABARAP, GABARAPL1 and GABARAPL2. Binds to ubiquitin and ubiquitinated proteins. Interacts with SQSTM1. Interacts with TAX1BP1. Interacts with IRF3; this interaction mediates autophagic degradation of IRF3. Interacts with IL12A and IL12B. (Microbial infection) Interacts with Influenza A virus protein PB1; this interaction promotes NBR1-mediated selective autophagic degradation of MAVS. Post-translationally, (Microbial infection) Cleaved by S.pyogenes SpeB protease; leading to its degradation. Degradation by SpeB prevents autophagy, promoting to S.pyogenes intracellular replication. Phosphorylated by GSK3A; this phosphorylation inhibits NBR1 involvement in the formation of ubiquitinated protein aggregates.

It localises to the cytoplasm. The protein resides in the cytoplasmic vesicle. Its subcellular location is the autophagosome. It is found in the lysosome. The protein localises to the myofibril. It localises to the sarcomere. The protein resides in the m line. Ubiquitin-binding autophagy adapter that participates in different processes including host defense or intracellular homeostasis. Possesses a double function during the selective autophagy by acting as a shuttle bringing ubiquitinated proteins to autophagosomes and also by participating in the formation of protein aggregates. Plays a role in the regulation of the innate immune response by modulating type I interferon production and targeting ubiquitinated IRF3 for autophagic degradation. In response to oxidative stress, promotes an increase in SQSTM1 levels, phosphorylation, and body formation by preventing its autophagic degradation. In turn, activates the KEAP1-NRF2/NFE2L2 antioxidant pathway. Also plays non-autophagy role by mediating the shuttle of IL-12 to late endosome for subsequent secretion. The polypeptide is Next to BRCA1 gene 1 protein (NBR1) (Homo sapiens (Human)).